A 66-amino-acid polypeptide reads, in one-letter code: U1-theraphotoxin-Cg1d 2 (66 aa).

An N-terminal signal peptide occupies residues 1 to 21; sequence MKMSALFPIFGLPLLFCNSFA. The propeptide occupies 22–29; that stretch reads AELKATGR. Intrachain disulfides connect Cys-31/Cys-46, Cys-38/Cys-51, and Cys-45/Cys-58. Residue Pro-63 is modified to Proline amide.

The protein belongs to the neurotoxin 10 (Hwtx-1) family. 46 (Jztx-7/10/12) subfamily. In terms of tissue distribution, expressed by the venom gland.

Its subcellular location is the secreted. In terms of biological role, probable ion channel inhibitor. The protein is U1-theraphotoxin-Cg1d 2 of Chilobrachys guangxiensis (Chinese earth tiger tarantula).